A 439-amino-acid chain; its full sequence is GTPase Der (439 aa).

EngA-type G domains are found at residues 4-168 and 177-352; these read PIVA…KDDE and INIA…DNYT. Residues 10–17, 57–61, 120–123, 183–190, 230–234, and 295–298 contribute to the GTP site; these read GRPNVGKS, DTGGI, NKID, GKPNVGKS, DTAGL, and NKWD. The KH-like domain maps to 353 to 437; that stretch reads KRVKTGVLND…GIKLEFRERK (85 aa).

It belongs to the TRAFAC class TrmE-Era-EngA-EngB-Septin-like GTPase superfamily. EngA (Der) GTPase family. In terms of assembly, associates with the 50S ribosomal subunit.

GTPase that plays an essential role in the late steps of ribosome biogenesis. The sequence is that of GTPase Der from Clostridium botulinum (strain Langeland / NCTC 10281 / Type F).